The chain runs to 76 residues: Senegalin (76 aa).

Residues 1–22 form the signal peptide; the sequence is MLSLKKSMLLLFFLGMVSFSLA. Positions 23-55 are excised as a propeptide; it reads NKRSDGKRADEEGEDKRADEEGEDKRADEEGED. The disordered stretch occupies residues 24–54; sequence KRSDGKRADEEGEDKRADEEGEDKRADEEGE. Leu-75 is modified (leucine amide).

As to expression, expressed by the skin glands.

The protein localises to the secreted. Functionally, antimicrobial peptide with activity against the Gram-positive bacterium S.aureus NCTC 10788 (MIC=50 um) and the yeast C.albicans NCPF 1467 (MIC=150 uM). Ineffective against the Gram-negative bacterium E.coli NCTC 10418. Induces a dose-dependent contraction of rat urinary bladder smooth muscle (EC50=2.9 nM) and a dose-dependent relaxation of rat tail artery smooth muscle (EC50=37.7 nM). The polypeptide is Senegalin (Kassina senegalensis (Senegal running frog)).